Reading from the N-terminus, the 477-residue chain is UDP-N-acetylmuramoylalanine--D-glutamate ligase (477 aa).

ATP is bound at residue 125-131; it reads GTNGKST.

This sequence belongs to the MurCDEF family.

The protein localises to the cytoplasm. The enzyme catalyses UDP-N-acetyl-alpha-D-muramoyl-L-alanine + D-glutamate + ATP = UDP-N-acetyl-alpha-D-muramoyl-L-alanyl-D-glutamate + ADP + phosphate + H(+). The protein operates within cell wall biogenesis; peptidoglycan biosynthesis. Cell wall formation. Catalyzes the addition of glutamate to the nucleotide precursor UDP-N-acetylmuramoyl-L-alanine (UMA). This chain is UDP-N-acetylmuramoylalanine--D-glutamate ligase, found in Rhodospirillum rubrum (strain ATCC 11170 / ATH 1.1.1 / DSM 467 / LMG 4362 / NCIMB 8255 / S1).